The chain runs to 131 residues: Small ribosomal subunit protein uS8 (131 aa).

The protein belongs to the universal ribosomal protein uS8 family. In terms of assembly, part of the 30S ribosomal subunit. Contacts proteins S5 and S12.

One of the primary rRNA binding proteins, it binds directly to 16S rRNA central domain where it helps coordinate assembly of the platform of the 30S subunit. The polypeptide is Small ribosomal subunit protein uS8 (Wolbachia pipientis wMel).